We begin with the raw amino-acid sequence, 443 residues long: Tol-Pal system protein TolB (443 aa).

The first 31 residues, 1 to 31 (MTRLAKGKWRSTLGAMMALAVMVAAIPQARA), serve as a signal peptide directing secretion. Polar residues predominate over residues 423-432 (NERQISTPTE). The disordered stretch occupies residues 423–443 (NERQISTPTEASDPAWSPLLP).

This sequence belongs to the TolB family. In terms of assembly, the Tol-Pal system is composed of five core proteins: the inner membrane proteins TolA, TolQ and TolR, the periplasmic protein TolB and the outer membrane protein Pal. They form a network linking the inner and outer membranes and the peptidoglycan layer.

The protein resides in the periplasm. In terms of biological role, part of the Tol-Pal system, which plays a role in outer membrane invagination during cell division and is important for maintaining outer membrane integrity. The protein is Tol-Pal system protein TolB of Rhodospirillum rubrum (strain ATCC 11170 / ATH 1.1.1 / DSM 467 / LMG 4362 / NCIMB 8255 / S1).